We begin with the raw amino-acid sequence, 90 residues long: Antitoxin epsilon (90 aa).

It belongs to the epsilon antitoxin family. In the presence of the zeta toxin, forms an inactive PezA(2)PezT(2) heterotetramer.

Functionally, antitoxin component of a type II toxin-antitoxin (TA) system. Neutralizes the toxic effect of cognate zeta toxin. Part of a postsegregational killing (PSK) system involved in the killing of plasmid-free cells. Continuous synthesis of the epsilon antitoxin is required to counteract the zeta toxin. The sequence is that of Antitoxin epsilon from Streptococcus agalactiae.